A 433-amino-acid chain; its full sequence is 4-hydroxy-3-methylbut-2-en-1-yl diphosphate synthase (flavodoxin) (433 aa).

The [4Fe-4S] cluster site is built by C320, C323, C366, and E373.

Belongs to the IspG family. [4Fe-4S] cluster serves as cofactor.

The enzyme catalyses (2E)-4-hydroxy-3-methylbut-2-enyl diphosphate + oxidized [flavodoxin] + H2O + 2 H(+) = 2-C-methyl-D-erythritol 2,4-cyclic diphosphate + reduced [flavodoxin]. It functions in the pathway isoprenoid biosynthesis; isopentenyl diphosphate biosynthesis via DXP pathway; isopentenyl diphosphate from 1-deoxy-D-xylulose 5-phosphate: step 5/6. In terms of biological role, converts 2C-methyl-D-erythritol 2,4-cyclodiphosphate (ME-2,4cPP) into 1-hydroxy-2-methyl-2-(E)-butenyl 4-diphosphate. The sequence is that of 4-hydroxy-3-methylbut-2-en-1-yl diphosphate synthase (flavodoxin) from Beijerinckia indica subsp. indica (strain ATCC 9039 / DSM 1715 / NCIMB 8712).